We begin with the raw amino-acid sequence, 564 residues long: Efflux pump DEP3 (564 aa).

Polar residues predominate over residues 1 to 12 (MVYSSTSSSQNR). The tract at residues 1–48 (MVYSSTSSSQNRPDGEKHVEAVGSSTRIPSDELVDRGGGDTTTGKQSP) is disordered. Residues 29-38 (PSDELVDRGG) show a composition bias toward basic and acidic residues. Transmembrane regions (helical) follow at residues 65–85 (STTL…PAII), 91–111 (LELL…ILLW), 122–142 (WVYI…GAAP), 152–172 (VIAG…VSVL), 185–205 (STVV…AFAA), 212–232 (WGFY…FLLF), 255–275 (AVIF…GGVV), 281–301 (GTVI…IVLL), 332–352 (FLSS…FQFI), 362–382 (VRLL…GFLM), 386–406 (GLIP…TALM), 423–443 (ILIG…VQSL), 452–472 (AVGA…AISG), and 528–548 (TIWA…FPLL).

Belongs to the major facilitator superfamily. TCR/Tet family.

Its subcellular location is the cell membrane. In terms of biological role, efflux pump; part of the gene cluster that mediates the biosynthesis of depudecin, a highly oxidized eleven-carbon linear polyketide that acts as a histone deacetylase (HDAC) inhibitor and makes a small contribution to pathogenesis. Is presumed either to be responsible for exporting depudecin, to provide self-protection, or both. The chain is Efflux pump DEP3 from Alternaria brassicicola (Dark leaf spot agent).